The following is a 756-amino-acid chain: Disintegrin and metalloproteinase domain-containing protein 5 (756 aa).

An N-terminal signal peptide occupies residues 1–16 (MFLLLVLLTGLGGMHA). Residues 17–142 (DLNPHKTFLQ…AVSGFIHKIY (126 aa)) constitute a propeptide that is removed on maturation. Over 17 to 698 (DLNPHKTFLQ…GRHAPFQKQR (682 aa)) the chain is Extracellular. The Peptidase M12B domain occupies 183–380 (RYIEMHIVVD…NGLTCLQTNP (198 aa)). 4 cysteine pairs are disulfide-bonded: Cys-292/Cys-375, Cys-334/Cys-359, Cys-336/Cys-341, and Cys-449/Cys-470. The 90-residue stretch at 389-478 (RRICGNGLLE…YCLLDTYVRD (90 aa)) folds into the Disintegrin domain. The N-linked (GlcNAc...) asparagine glycan is linked to Asn-559. Residues 630–664 (DFETCEASIECSGHGICNNFNHCHCEKGYNPPHCK) form the EGF-like domain. 3 disulfides stabilise this stretch: Cys-634–Cys-646, Cys-640–Cys-652, and Cys-654–Cys-663. The chain crosses the membrane as a helical span at residues 699 to 719 (FQLIFYISLPVLIITTAILIK). The Cytoplasmic portion of the chain corresponds to 720 to 756 (RKKLRELCYRGETESESSVSQESSSNSKSSLSESTSL). A disordered region spans residues 731-756 (ETESESSVSQESSSNSKSSLSESTSL). Residues 735–756 (ESSVSQESSSNSKSSLSESTSL) are compositionally biased toward low complexity.

In terms of assembly, interacts with TEX101. Subject to proteolytic processing during epididymal transit of spermatozoa. In terms of tissue distribution, detected in testis (at protein level). Detected in adult and prepubertal testis. Detected at very low levels in heart, kidney, brain, muscle ovary and uterus.

The protein localises to the membrane. Functionally, this is a non catalytic metalloprotease-like protein. May play a role in sperm-egg fusion. In Macaca fascicularis (Crab-eating macaque), this protein is Disintegrin and metalloproteinase domain-containing protein 5 (ADAM5).